Consider the following 403-residue polypeptide: Metacaspase-1A (403 aa).

Residues 1 to 93 (MQHHHHSSYG…PPTDPVAFGH (93 aa)) form a disordered region. Over residues 18–31 (GQAYRQQQPYYGQP) the composition is skewed to low complexity. A compositionally biased stretch (pro residues) spans 32 to 55 (SPQPYAQPPPPNYQRPSGYGPPPS). Residues His-194 and Cys-250 contribute to the active site.

This sequence belongs to the peptidase C14B family.

Its function is as follows. Involved in cell death (apoptosis). In Aspergillus terreus (strain NIH 2624 / FGSC A1156), this protein is Metacaspase-1A (casA).